The primary structure comprises 345 residues: N-acetyl-gamma-glutamyl-phosphate reductase (345 aa).

Cysteine 142 is an active-site residue.

The protein belongs to the NAGSA dehydrogenase family. Type 1 subfamily.

Its subcellular location is the cytoplasm. The enzyme catalyses N-acetyl-L-glutamate 5-semialdehyde + phosphate + NADP(+) = N-acetyl-L-glutamyl 5-phosphate + NADPH + H(+). The protein operates within amino-acid biosynthesis; L-arginine biosynthesis; N(2)-acetyl-L-ornithine from L-glutamate: step 3/4. Functionally, catalyzes the NADPH-dependent reduction of N-acetyl-5-glutamyl phosphate to yield N-acetyl-L-glutamate 5-semialdehyde. This Thermus thermophilus (strain ATCC BAA-163 / DSM 7039 / HB27) protein is N-acetyl-gamma-glutamyl-phosphate reductase.